The sequence spans 118 residues: Large ribosomal subunit protein uL18 (118 aa).

Belongs to the universal ribosomal protein uL18 family. As to quaternary structure, part of the 50S ribosomal subunit; part of the 5S rRNA/L5/L18/L25 subcomplex. Contacts the 5S and 23S rRNAs.

In terms of biological role, this is one of the proteins that bind and probably mediate the attachment of the 5S RNA into the large ribosomal subunit, where it forms part of the central protuberance. The sequence is that of Large ribosomal subunit protein uL18 from Rickettsia peacockii (strain Rustic).